The sequence spans 357 residues: Anthranilate phosphoribosyltransferase (357 aa).

5-phospho-alpha-D-ribose 1-diphosphate is bound by residues G91, 94 to 95, T99, 101 to 104, 119 to 127, and S131; these read GD, NIST, and KHGNRSVSS. G91 is a binding site for anthranilate. S103 serves as a coordination point for Mg(2+). N122 serves as a coordination point for anthranilate. R177 contacts anthranilate. The Mg(2+) site is built by D235 and E236.

This sequence belongs to the anthranilate phosphoribosyltransferase family. In terms of assembly, homodimer. The cofactor is Mg(2+).

The enzyme catalyses N-(5-phospho-beta-D-ribosyl)anthranilate + diphosphate = 5-phospho-alpha-D-ribose 1-diphosphate + anthranilate. It participates in amino-acid biosynthesis; L-tryptophan biosynthesis; L-tryptophan from chorismate: step 2/5. Functionally, catalyzes the transfer of the phosphoribosyl group of 5-phosphorylribose-1-pyrophosphate (PRPP) to anthranilate to yield N-(5'-phosphoribosyl)-anthranilate (PRA). This Shewanella baltica (strain OS195) protein is Anthranilate phosphoribosyltransferase.